The chain runs to 251 residues: Vitamin B12 import ATP-binding protein BtuD (251 aa).

The 235-residue stretch at 2 to 236 (IRVNSLQVDS…EVLQSVFGTS (235 aa)) folds into the ABC transporter domain. 30–37 (GPNGCGKS) provides a ligand contact to ATP.

It belongs to the ABC transporter superfamily. Vitamin B12 importer (TC 3.A.1.13.1) family. In terms of assembly, the complex is composed of two ATP-binding proteins (BtuD), two transmembrane proteins (BtuC) and a solute-binding protein (BtuF).

It is found in the cell inner membrane. It carries out the reaction an R-cob(III)alamin(out) + ATP + H2O = an R-cob(III)alamin(in) + ADP + phosphate + H(+). Functionally, part of the ABC transporter complex BtuCDF involved in vitamin B12 import. Responsible for energy coupling to the transport system. This chain is Vitamin B12 import ATP-binding protein BtuD, found in Vibrio cholerae serotype O1 (strain ATCC 39315 / El Tor Inaba N16961).